Here is a 104-residue protein sequence, read N- to C-terminus: Thioredoxin (104 aa).

A Thioredoxin domain is found at 2–104 (AIVKVTDSNF…NLAEVIEKHL (103 aa)). The cysteines at positions 29 and 32 are disulfide-linked.

The protein belongs to the thioredoxin family.

In terms of biological role, component of the thioredoxin-thioredoxin reductase system. Participates in various redox reactions through the reversible oxidation of its active center dithiol to a disulfide and catalyzes dithiol-disulfide exchange reactions. In Staphylococcus saprophyticus subsp. saprophyticus (strain ATCC 15305 / DSM 20229 / NCIMB 8711 / NCTC 7292 / S-41), this protein is Thioredoxin (trxA).